The chain runs to 546 residues: Putative serine hydroxymethyltransferase, mitochondrial (546 aa).

Residues 1 to 64 constitute a mitochondrion transit peptide; the sequence is MSSFQSTAAV…RFSSSSIAND (64 aa). Lys305 bears the N6-(pyridoxal phosphate)lysine mark.

The protein belongs to the SHMT family. As to quaternary structure, homotetramer. Pyridoxal 5'-phosphate serves as cofactor.

The protein resides in the mitochondrion. The catalysed reaction is (6R)-5,10-methylene-5,6,7,8-tetrahydrofolate + glycine + H2O = (6S)-5,6,7,8-tetrahydrofolate + L-serine. It participates in one-carbon metabolism; tetrahydrofolate interconversion. Its function is as follows. Interconversion of serine and glycine. This chain is Putative serine hydroxymethyltransferase, mitochondrial (cbs-2), found in Neurospora crassa (strain ATCC 24698 / 74-OR23-1A / CBS 708.71 / DSM 1257 / FGSC 987).